A 137-amino-acid chain; its full sequence is Lysozyme (137 aa).

The signal sequence occupies residues 1–18; it reads MQKLIIFALVVLCVGSEA. The 119-residue stretch at 19–137 folds into the C-type lysozyme domain; that stretch reads KTFTRCGLVH…QGSLPDISSC (119 aa). Disulfide bonds link cysteine 24–cysteine 137, cysteine 45–cysteine 127, cysteine 79–cysteine 93, and cysteine 89–cysteine 107. Active-site residues include glutamate 50 and aspartate 67.

It belongs to the glycosyl hydrolase 22 family.

The enzyme catalyses Hydrolysis of (1-&gt;4)-beta-linkages between N-acetylmuramic acid and N-acetyl-D-glucosamine residues in a peptidoglycan and between N-acetyl-D-glucosamine residues in chitodextrins.. Its function is as follows. Lysozymes have primarily a bacteriolytic function; those in tissues and body fluids are associated with the monocyte-macrophage system and enhance the activity of immunoagents. Active against E.coli and M.luteus. This Bombyx mori (Silk moth) protein is Lysozyme.